Reading from the N-terminus, the 811-residue chain is TLR4 interactor with leucine rich repeats (811 aa).

The N-terminal stretch at M1–S25 is a signal peptide. The LRRNT domain maps to V26–S57. The Extracellular segment spans residues V26–Q696. LRR repeat units lie at residues V61–R81, Q84–K105, R108–P129, K132–G153, S156–P177, N180–Q201, K204–A223, S230–H251, R254–G275, A278–E298, S302–H323, and R326–A347. N-linked (GlcNAc...) asparagine glycosylation is present at N73. The LRRCT domain maps to N359–D416. An N-linked (GlcNAc...) asparagine glycan is attached at N411. 2 disordered regions span residues C414 to G460 and R486 to R562. Over residues P421–I430 the composition is skewed to polar residues. 2 stretches are compositionally biased toward low complexity: residues P440–G460 and Q494–S508. Over residues D510 to R519 the composition is skewed to basic and acidic residues. A compositionally biased stretch (polar residues) spans N524–D545. N589 carries N-linked (GlcNAc...) asparagine glycosylation. The helical transmembrane segment at L697–W717 threads the bilayer. The Cytoplasmic segment spans residues G718–F809. At S798 the chain carries Phosphoserine.

In terms of assembly, belongs to the lipopolysaccharide (LPS) receptor, a multi-protein complex containing at least CD14, MD-2 and TLR4. Interacts with TLR4; this interaction is greatly enhanced following LPS stimulation. Interacts with LPS. N-glycolysaled. Highly expressed in cortical astrocytes and in cerebellar granule neurons.

The protein localises to the membrane. Component of the TLR4 signaling complex. Mediates the innate immune response to bacterial lipopolysaccharide (LPS) leading to cytokine secretion and the inflammatory response. This is TLR4 interactor with leucine rich repeats (Tril) from Rattus norvegicus (Rat).